The following is a 458-amino-acid chain: MALWGGRFQQEADAKFKFFNDSLRFDYRLALQDIDGSIGWAKAITAVGILTEAECAKLVDALKTLRAEIEPNIAIILRDAAEDIHSWVESKLIEKVGDLGKKLHTGRSRNDQVALDMKMWCKVQVIVLQQCIRNLQHKLVATAEDNQQTIMPGYTHLQRAQPISFAHWCMAYYEMLERDYTRLTDAYQRMHTCPLGCGALAGSAYPIDRDQLAQDLHFEIATRNSLDSVSDRDHLLELLASASISMVHLSRFAEDLIFFNSGESAFLELSDRVTSGSSLMPQKKNPDACELIRGKSGRVFGALSGLLTTLKGLPLAYNKDMQEDKEGIFDAVETWQACLEMATLVLEDINVNVVRTSEAAQQGYSNATELADYLVAKGIPFREAHHIVGETVVYAIQQRKPLEALSVTEFKQFHSVIDQDVYAILSLPSCLAKRSAKGGVNPSRVKEAIEVAKQHLAS.

This sequence belongs to the lyase 1 family. Argininosuccinate lyase subfamily.

The protein localises to the cytoplasm. It carries out the reaction 2-(N(omega)-L-arginino)succinate = fumarate + L-arginine. The protein operates within amino-acid biosynthesis; L-arginine biosynthesis; L-arginine from L-ornithine and carbamoyl phosphate: step 3/3. The sequence is that of Argininosuccinate lyase from Haemophilus ducreyi (strain 35000HP / ATCC 700724).